A 1240-amino-acid polypeptide reads, in one-letter code: DNA-directed RNA polymerase subunit beta (1240 aa).

The protein belongs to the RNA polymerase beta chain family. The RNAP catalytic core consists of 2 alpha, 1 beta, 1 beta' and 1 omega subunit. When a sigma factor is associated with the core the holoenzyme is formed, which can initiate transcription.

The catalysed reaction is RNA(n) + a ribonucleoside 5'-triphosphate = RNA(n+1) + diphosphate. Functionally, DNA-dependent RNA polymerase catalyzes the transcription of DNA into RNA using the four ribonucleoside triphosphates as substrates. This chain is DNA-directed RNA polymerase subunit beta, found in Rhodopirellula baltica (strain DSM 10527 / NCIMB 13988 / SH1).